We begin with the raw amino-acid sequence, 160 residues long: Putative 4-hydroxy-4-methyl-2-oxoglutarate aldolase (160 aa).

Residues 78 to 81 (GDVI) and Arg-100 each bind substrate. An a divalent metal cation-binding site is contributed by Asp-101.

Belongs to the class II aldolase/RraA-like family. Homotrimer. A divalent metal cation is required as a cofactor.

It catalyses the reaction 4-hydroxy-4-methyl-2-oxoglutarate = 2 pyruvate. The enzyme catalyses oxaloacetate + H(+) = pyruvate + CO2. In terms of biological role, catalyzes the aldol cleavage of 4-hydroxy-4-methyl-2-oxoglutarate (HMG) into 2 molecules of pyruvate. Also contains a secondary oxaloacetate (OAA) decarboxylase activity due to the common pyruvate enolate transition state formed following C-C bond cleavage in the retro-aldol and decarboxylation reactions. The protein is Putative 4-hydroxy-4-methyl-2-oxoglutarate aldolase of Mycolicibacterium vanbaalenii (strain DSM 7251 / JCM 13017 / BCRC 16820 / KCTC 9966 / NRRL B-24157 / PYR-1) (Mycobacterium vanbaalenii).